The following is a 250-amino-acid chain: Coproheme decarboxylase (250 aa).

Residues R131, 145-149 (YPMNK), H172, and Q185 contribute to the Fe-coproporphyrin III site. The active site involves Y145.

This sequence belongs to the ChdC family. Type 1 subfamily. Requires Fe-coproporphyrin III as cofactor.

It carries out the reaction Fe-coproporphyrin III + 2 H2O2 + 2 H(+) = heme b + 2 CO2 + 4 H2O. It catalyses the reaction Fe-coproporphyrin III + H2O2 + H(+) = harderoheme III + CO2 + 2 H2O. The enzyme catalyses harderoheme III + H2O2 + H(+) = heme b + CO2 + 2 H2O. Its pathway is porphyrin-containing compound metabolism; protoheme biosynthesis. Its function is as follows. Involved in coproporphyrin-dependent heme b biosynthesis. Catalyzes the decarboxylation of Fe-coproporphyrin III (coproheme) to heme b (protoheme IX), the last step of the pathway. The reaction occurs in a stepwise manner with a three-propionate intermediate. The protein is Coproheme decarboxylase of Staphylococcus aureus (strain Mu50 / ATCC 700699).